We begin with the raw amino-acid sequence, 154 residues long: Protein SprT-like (154 aa).

The region spanning 6-144 (LQQLTETISL…CGTCHGKLKF (139 aa)) is the SprT-like domain. Zn(2+) is bound at residue H67. Residue E68 is part of the active site. H71 is a binding site for Zn(2+).

The protein belongs to the SprT family. Zn(2+) is required as a cofactor.

It is found in the cytoplasm. The protein is Protein SprT-like of Shouchella clausii (strain KSM-K16) (Alkalihalobacillus clausii).